Reading from the N-terminus, the 275-residue chain is MKNTIQTFKNAKYEGKKLSMLTAYDYSIAKIMDECDINGILIGDSLGMVIKGEENTLSVTIDEIIYHTKAVKNGVKNALIVSDMPFLSYHVSIEDAVKNAGRLIKEGGAHAVKLEGGSNVIKQIESIVNAQIPVMGHLGLTPQSVNSFGGFKVQGNTSETARQLIEDAKLIEKAGAFSIVLEGVPTKIAEMVTNSISIPTIGIGAGINCDGQILVYQDMLGMFGDFVPKFVKQYANIGDIMKDSIKNYILEVNTGAFPQEKHSFSINESELEKLY.

Positions 44 and 83 each coordinate Mg(2+). 3-methyl-2-oxobutanoate contacts are provided by residues 44–45 (DS), Asp83, and Lys113. Position 115 (Glu115) interacts with Mg(2+). Glu182 acts as the Proton acceptor in catalysis.

This sequence belongs to the PanB family. As to quaternary structure, homodecamer; pentamer of dimers. It depends on Mg(2+) as a cofactor.

The protein resides in the cytoplasm. The catalysed reaction is 3-methyl-2-oxobutanoate + (6R)-5,10-methylene-5,6,7,8-tetrahydrofolate + H2O = 2-dehydropantoate + (6S)-5,6,7,8-tetrahydrofolate. It participates in cofactor biosynthesis; (R)-pantothenate biosynthesis; (R)-pantoate from 3-methyl-2-oxobutanoate: step 1/2. Functionally, catalyzes the reversible reaction in which hydroxymethyl group from 5,10-methylenetetrahydrofolate is transferred onto alpha-ketoisovalerate to form ketopantoate. This chain is 3-methyl-2-oxobutanoate hydroxymethyltransferase, found in Clostridioides difficile (strain 630) (Peptoclostridium difficile).